The primary structure comprises 235 residues: uncharacterized protein (235 aa).

An N-terminal signal peptide occupies residues 1-24 (MSDRMKLKGLLAFCLLFLSSFVLA).

This is an uncharacterized protein from Haemophilus influenzae (strain ATCC 51907 / DSM 11121 / KW20 / Rd).